The chain runs to 677 residues: MTQVAKQILVTCALPYANGSIHLGHMLEHIQADVWVRYQRMRGHEVNFICADDAHGTPIMLKAQQLGITPEQMIGEMSQEHQTDFAGFNISYDNYHSTHSEENRQLSELIYSRLKENGFIKNRTISQLYDPEKGMFLPDRFVKGTCPKCKSPDQYGDNCEVCGATYSPTELIEPKSVVSGATPVMRDSEHFFFDLPSFSEMLQAWTRSGALQEQVANKMQEWFESGLQQWDISRDAPYFGFEIPNAPGKYFYVWLDAPIGYMGSFKNLCDKRGDSVSFDEYWKKDSTAELYHFIGKDIVYFHSLFWPAMLEGSNFRKPTNLFVHGYVTVNSAKMSKSRGTFIKASTWLNHFDADSLRYYYTAKLSSRIDDIDLNLEDFVQRVNADIVNKVVNLASRNAGFINKRFDGVLASELADPELYKTFTDAAEVIGEAWESREFGKAVREIMALADLANRYVDEQAPWVVAKQEGRDADLQAICSMGINLFRVLMTYLKPVLPKLTERAEAFLNTELTWDGIQQPLLGHKVNPFKALYNRIDMKQVEALVEASKEEVKAAAAPVTGPLADDPIQETITFDDFAKVDLRVALIENAEFVEGSDKLLRLTLDLGGEKRNVFSGIRSAYPDPQALIGRHTIMVANLAPRKMRFGISEGMVMAAGPGGKDIFLLSPDAGAKPGHQVK.

The short motif at 15-25 (PYANGSIHLGH) is the 'HIGH' region element. 4 residues coordinate Zn(2+): Cys-146, Cys-149, Cys-159, and Cys-162. The 'KMSKS' region signature appears at 333-337 (KMSKS). Lys-336 serves as a coordination point for ATP. The tRNA-binding domain occupies 575-677 (DFAKVDLRVA…AGAKPGHQVK (103 aa)).

The protein belongs to the class-I aminoacyl-tRNA synthetase family. MetG type 1 subfamily. In terms of assembly, homodimer. It depends on Zn(2+) as a cofactor.

The protein localises to the cytoplasm. The enzyme catalyses tRNA(Met) + L-methionine + ATP = L-methionyl-tRNA(Met) + AMP + diphosphate. In terms of biological role, is required not only for elongation of protein synthesis but also for the initiation of all mRNA translation through initiator tRNA(fMet) aminoacylation. The polypeptide is Methionine--tRNA ligase (Shigella dysenteriae serotype 1 (strain Sd197)).